We begin with the raw amino-acid sequence, 165 residues long: Urease accessory protein UreE (165 aa).

The protein belongs to the UreE family.

It localises to the cytoplasm. In terms of biological role, involved in urease metallocenter assembly. Binds nickel. Probably functions as a nickel donor during metallocenter assembly. This chain is Urease accessory protein UreE, found in Micrococcus luteus (strain ATCC 4698 / DSM 20030 / JCM 1464 / CCM 169 / CCUG 5858 / IAM 1056 / NBRC 3333 / NCIMB 9278 / NCTC 2665 / VKM Ac-2230) (Micrococcus lysodeikticus).